The sequence spans 390 residues: Lipid-A-disaccharide synthase (390 aa).

The protein belongs to the LpxB family.

The catalysed reaction is a lipid X + a UDP-2-N,3-O-bis[(3R)-3-hydroxyacyl]-alpha-D-glucosamine = a lipid A disaccharide + UDP + H(+). Its pathway is bacterial outer membrane biogenesis; LPS lipid A biosynthesis. Functionally, condensation of UDP-2,3-diacylglucosamine and 2,3-diacylglucosamine-1-phosphate to form lipid A disaccharide, a precursor of lipid A, a phosphorylated glycolipid that anchors the lipopolysaccharide to the outer membrane of the cell. In Haemophilus influenzae (strain PittEE), this protein is Lipid-A-disaccharide synthase.